Consider the following 336-residue polypeptide: PHD finger protein 11 (336 aa).

Residues 1–20 (MAEETAPPCGPVSTGGSLSP) are disordered. The C2HC pre-PHD-type zinc-finger motif lies at 25–61 (KRTCALCPDGHEWSVIYFAPSANIAAHENCLLYSSGL). Residues 91-143 (LKCSLCNKGGATVGCDLSSCRKSYHYVCAKKDHAIPQVDEDLGTYKIFCPEHP) form a PHD-type zinc finger. 2 disordered regions span residues 139–179 (CPEH…KKMK) and 303–336 (DPSGSTSGSLLPPEDHQCRCQESPEVQAGSGDSL). Low complexity predominate over residues 303 to 314 (DPSGSTSGSLLP).

In terms of assembly, interacts with BRCA1 and RELA.

It is found in the nucleus. Functionally, positive regulator of Th1-type cytokine gene expression. This chain is PHD finger protein 11 (Phf11), found in Rattus norvegicus (Rat).